The primary structure comprises 252 residues: Trans-aconitate 2-methyltransferase (252 aa).

It belongs to the methyltransferase superfamily. Tam family.

The protein resides in the cytoplasm. The enzyme catalyses trans-aconitate + S-adenosyl-L-methionine = (E)-3-(methoxycarbonyl)pent-2-enedioate + S-adenosyl-L-homocysteine. Catalyzes the S-adenosylmethionine monomethyl esterification of trans-aconitate. This chain is Trans-aconitate 2-methyltransferase, found in Escherichia coli O1:K1 / APEC.